The sequence spans 212 residues: Endoplasmic reticulum vesicle protein 25 (212 aa).

A signal peptide spans 1–21; that stretch reads MKSFAACVLLLCALFFEQVFA. Residues 22–181 are Lumenal-facing; it reads VRFDIPASTK…TNESTNRRVR (160 aa). Residues 34–122 enclose the GOLD domain; sequence QVCIRDFVSE…SRSIELDIES (89 aa). Residues 182 to 202 form a helical membrane-spanning segment; that stretch reads NFSIAVIVVLVALGAWQVNYM. Residues 203-212 are Cytoplasmic-facing; it reads KNFFRAKHII.

This sequence belongs to the EMP24/GP25L family.

The protein localises to the endoplasmic reticulum membrane. The protein resides in the golgi apparatus membrane. Its function is as follows. Constituent of COPII-coated endoplasmic reticulum-derived transport vesicles. Required for efficient transport of a subset of secretory proteins to the Golgi. Facilitates retrograde transport from the Golgi to the endoplasmic reticulum. This is Endoplasmic reticulum vesicle protein 25 (ERV25) from Kluyveromyces lactis (strain ATCC 8585 / CBS 2359 / DSM 70799 / NBRC 1267 / NRRL Y-1140 / WM37) (Yeast).